We begin with the raw amino-acid sequence, 426 residues long: MTEFDLNQYMDRVGRQARAASRAIARASTADKNRALLTIAAAIRRDADQLKAVNARDVERARANGQDAAFVDRLTLSDKAIATMAAGLEQIAALPDPIGEISNMKFRPTGIQVGQMRVPLGVIGIIYESRPNVTIDAAALCLKSGNATILRGGSEAIESNTALAALVAEGLSAAGLPPEAVQVIETTDRAAVGRLITMTEFVDVIVPRGGKSLIARLMEEARVPMIKHLDGICHVYIDAEADLDKAVRVCDNAKTQRYAPCNTMETLLVSQDIAAAALPPLCRIYQQKGVELRVCPATRATLEAAGFSGLVDASEEDWRLEYLAPILAIKTVVGLDQAISHINEYGSHHTDSIITENYSAGMRFIREVDSASVMINASTRFADGFEYGLGAEIGISNDKLHARGPVGLEGLTSLKYVVFGHGEVRT.

This sequence belongs to the gamma-glutamyl phosphate reductase family.

It is found in the cytoplasm. The catalysed reaction is L-glutamate 5-semialdehyde + phosphate + NADP(+) = L-glutamyl 5-phosphate + NADPH + H(+). The protein operates within amino-acid biosynthesis; L-proline biosynthesis; L-glutamate 5-semialdehyde from L-glutamate: step 2/2. Its function is as follows. Catalyzes the NADPH-dependent reduction of L-glutamate 5-phosphate into L-glutamate 5-semialdehyde and phosphate. The product spontaneously undergoes cyclization to form 1-pyrroline-5-carboxylate. In Cupriavidus taiwanensis (strain DSM 17343 / BCRC 17206 / CCUG 44338 / CIP 107171 / LMG 19424 / R1) (Ralstonia taiwanensis (strain LMG 19424)), this protein is Gamma-glutamyl phosphate reductase.